A 201-amino-acid polypeptide reads, in one-letter code: Heat shock protein beta-1 (201 aa).

At Arg-12 the chain carries Omega-N-methylarginine. Ser-15 is subject to Phosphoserine; by MAPKAPK2 and MAPKAPK3. Ser-27 is modified (phosphoserine). Residues 68-201 (AYNRALSRQL…AGKSEQPENK (134 aa)) are interaction with TGFB1I1. Positions 72-180 (ALSRQLSSGV…QSAEITIPVT (109 aa)) constitute a sHSP domain. Residues Ser-74 and Ser-78 each carry the phosphoserine; by MAPKAPK2, MAPKAPK3 and MAPKAPK5 modification. A phosphoserine mark is found at Ser-79, Ser-82, and Ser-94. Residue Lys-119 is modified to N6-acetyllysine. Thr-170 bears the Phosphothreonine mark. 2 positions are modified to phosphoserine: Ser-172 and Ser-195.

Belongs to the small heat shock protein (HSP20) family. In terms of assembly, homooligomer. Homodimer; becomes monomeric upon activation. Heterooligomer; with HSPB6. Associates with alpha- and beta-tubulin. Interacts with TGFB1I1. Interacts with CRYAB. Interacts with HSPB8. Interacts with HSPBAP1. Phosphorylated upon exposure to protein kinase C activators and heat shock. Phosphorylation by MAPKAPK2 and MAPKAPK3 in response to stress dissociates HSPB1 from large small heat-shock protein (sHsps) oligomers and impairs its chaperone activity and ability to protect against oxidative stress effectively. Phosphorylation by MAPKAPK5 in response to PKA stimulation induces F-actin rearrangement.

The protein resides in the cytoplasm. Its subcellular location is the nucleus. It is found in the cytoskeleton. The protein localises to the spindle. Functionally, small heat shock protein which functions as a molecular chaperone probably maintaining denatured proteins in a folding-competent state. Plays a role in stress resistance and actin organization. Through its molecular chaperone activity may regulate numerous biological processes including the phosphorylation and the axonal transport of neurofilament proteins. This chain is Heat shock protein beta-1 (HSPB1), found in Bos taurus (Bovine).